The sequence spans 148 residues: UPF0134 protein MPN_410 (148 aa).

Belongs to the UPF0134 family.

The protein is UPF0134 protein MPN_410 of Mycoplasma pneumoniae (strain ATCC 29342 / M129 / Subtype 1) (Mycoplasmoides pneumoniae).